We begin with the raw amino-acid sequence, 457 residues long: UDP-glycosyltransferase 708C1 (457 aa).

Glycine 31 serves as a coordination point for UDP-alpha-D-glucose. Catalysis depends on histidine 32, which acts as the Proton acceptor. Residue histidine 32 coordinates an anthocyanidin. Threonine 34 is a binding site for UDP-alpha-D-glucose. Asparagine 94 serves as a coordination point for an anthocyanidin. Aspartate 129 (charge relay) is an active-site residue. Residue threonine 150 coordinates UDP-alpha-D-glucose. Positions 279 to 280 are UDP; the sequence is NR. Positions 341, 343, 358, 361, 362, 363, and 366 each coordinate UDP-alpha-D-glucose. Glycine 381 lines the an anthocyanidin pocket. UDP-alpha-D-glucose is bound by residues aspartate 382 and glutamine 383.

It belongs to the UDP-glycosyltransferase family. As to expression, expressed in cotyledons. Not detected in flowers, leaves, roots and hypocotyls.

The catalysed reaction is a 3'-hydro-2'-hydroxy-beta-oxodihydrochalcone + UDP-alpha-D-glucose = a 3'-(beta-D-glucopyranosyl)-2'-hydroxy-beta-oxodihydrochalcone + UDP + H(+). Its function is as follows. UDP-glucose-dependent glucosyltransferase catalyzing the C-glucosylation of 2-hydroxyflavanones (2-hydroxynaringenin, 2-hydroxyeriodictyol and 2-hydroxypinocembrin) and phloretin. No activity with flavanones, flavones or flavonols. Exhibits C-glycosylation activity toward 2',4',6'-trihydroxyacetophenone and phloretin using UDP-glucose as sugar donor. Can use UDP-galactose as sugar donor, but catalytic efficiency is 14-fold lower toward UDP-galactose than toward UDP-glucose. The protein is UDP-glycosyltransferase 708C1 of Fagopyrum esculentum (Common buckwheat).